Consider the following 65-residue polypeptide: Large ribosomal subunit protein bL28 (65 aa).

This sequence belongs to the bacterial ribosomal protein bL28 family.

This chain is Large ribosomal subunit protein bL28, found in Pseudothermotoga lettingae (strain ATCC BAA-301 / DSM 14385 / NBRC 107922 / TMO) (Thermotoga lettingae).